Consider the following 72-residue polypeptide: Translation initiation factor IF-1 (72 aa).

One can recognise an S1-like domain in the interval methionine 1–lysine 72.

The protein belongs to the IF-1 family. In terms of assembly, component of the 30S ribosomal translation pre-initiation complex which assembles on the 30S ribosome in the order IF-2 and IF-3, IF-1 and N-formylmethionyl-tRNA(fMet); mRNA recruitment can occur at any time during PIC assembly.

Its subcellular location is the cytoplasm. Its function is as follows. One of the essential components for the initiation of protein synthesis. Stabilizes the binding of IF-2 and IF-3 on the 30S subunit to which N-formylmethionyl-tRNA(fMet) subsequently binds. Helps modulate mRNA selection, yielding the 30S pre-initiation complex (PIC). Upon addition of the 50S ribosomal subunit IF-1, IF-2 and IF-3 are released leaving the mature 70S translation initiation complex. The chain is Translation initiation factor IF-1 from Bartonella henselae (strain ATCC 49882 / DSM 28221 / CCUG 30454 / Houston 1) (Rochalimaea henselae).